A 349-amino-acid polypeptide reads, in one-letter code: Histidinol-phosphate aminotransferase (349 aa).

At K206 the chain carries N6-(pyridoxal phosphate)lysine.

The protein belongs to the class-II pyridoxal-phosphate-dependent aminotransferase family. Histidinol-phosphate aminotransferase subfamily. In terms of assembly, homodimer. Pyridoxal 5'-phosphate serves as cofactor.

It catalyses the reaction L-histidinol phosphate + 2-oxoglutarate = 3-(imidazol-4-yl)-2-oxopropyl phosphate + L-glutamate. It functions in the pathway amino-acid biosynthesis; L-histidine biosynthesis; L-histidine from 5-phospho-alpha-D-ribose 1-diphosphate: step 7/9. The chain is Histidinol-phosphate aminotransferase from Streptococcus mutans serotype c (strain ATCC 700610 / UA159).